We begin with the raw amino-acid sequence, 214 residues long: Nodulation protein A (214 aa).

This sequence belongs to the NodA family.

It localises to the cytoplasm. Functionally, N-acyltransferase required for nodulation. Acts in the production of a small, heat-stable compound (Nod) that stimulates mitosis in various plant protoplasts. This is Nodulation protein A from Methylobacterium nodulans (strain LMG 21967 / CNCM I-2342 / ORS 2060).